The chain runs to 312 residues: tRNA dimethylallyltransferase (312 aa).

An ATP-binding site is contributed by 13 to 20; that stretch reads GPTAVGKT. 15–20 contributes to the substrate binding site; it reads TAVGKT. Interaction with substrate tRNA regions lie at residues 38-41 and 163-167; these read DSVQ and QRVVR.

The protein belongs to the IPP transferase family. Monomer. Mg(2+) is required as a cofactor.

It carries out the reaction adenosine(37) in tRNA + dimethylallyl diphosphate = N(6)-dimethylallyladenosine(37) in tRNA + diphosphate. Functionally, catalyzes the transfer of a dimethylallyl group onto the adenine at position 37 in tRNAs that read codons beginning with uridine, leading to the formation of N6-(dimethylallyl)adenosine (i(6)A). This chain is tRNA dimethylallyltransferase, found in Exiguobacterium sibiricum (strain DSM 17290 / CCUG 55495 / CIP 109462 / JCM 13490 / 255-15).